The sequence spans 491 residues: Protein nucleotidyltransferase YdiU (491 aa).

Positions 88, 90, 91, 111, 123, 124, 174, and 181 each coordinate ATP. Catalysis depends on Asp250, which acts as the Proton acceptor. Mg(2+)-binding residues include Asn251 and Asp260. ATP is bound at residue Asp260. Positions 466–484 are enriched in basic and acidic residues; the sequence is DDQPDRADYAEPPQPEERV. The segment at 466 to 491 is disordered; sequence DDQPDRADYAEPPQPEERVLQTFCGT.

The protein belongs to the SELO family. It depends on Mg(2+) as a cofactor. Requires Mn(2+) as cofactor.

The enzyme catalyses L-seryl-[protein] + ATP = 3-O-(5'-adenylyl)-L-seryl-[protein] + diphosphate. It catalyses the reaction L-threonyl-[protein] + ATP = 3-O-(5'-adenylyl)-L-threonyl-[protein] + diphosphate. The catalysed reaction is L-tyrosyl-[protein] + ATP = O-(5'-adenylyl)-L-tyrosyl-[protein] + diphosphate. It carries out the reaction L-histidyl-[protein] + UTP = N(tele)-(5'-uridylyl)-L-histidyl-[protein] + diphosphate. The enzyme catalyses L-seryl-[protein] + UTP = O-(5'-uridylyl)-L-seryl-[protein] + diphosphate. It catalyses the reaction L-tyrosyl-[protein] + UTP = O-(5'-uridylyl)-L-tyrosyl-[protein] + diphosphate. Functionally, nucleotidyltransferase involved in the post-translational modification of proteins. It can catalyze the addition of adenosine monophosphate (AMP) or uridine monophosphate (UMP) to a protein, resulting in modifications known as AMPylation and UMPylation. In Bradyrhizobium sp. (strain ORS 278), this protein is Protein nucleotidyltransferase YdiU.